We begin with the raw amino-acid sequence, 339 residues long: GTP 3',8-cyclase (339 aa).

Positions 13–249 (RYGRPLRDLR…GEVAQRHAFA (237 aa)) constitute a Radical SAM core domain. Arg22 lines the GTP pocket. Residues Cys29 and Cys33 each contribute to the [4Fe-4S] cluster site. S-adenosyl-L-methionine is bound at residue Tyr35. Cys36 provides a ligand contact to [4Fe-4S] cluster. Arg75 serves as a coordination point for GTP. Gly79 is a binding site for S-adenosyl-L-methionine. Thr106 contacts GTP. Ser130 is a binding site for S-adenosyl-L-methionine. GTP is bound at residue Lys168. Met202 is a binding site for S-adenosyl-L-methionine. [4Fe-4S] cluster contacts are provided by Cys266 and Cys269. Position 271 to 273 (271 to 273 (RAR)) interacts with GTP. Cys283 contributes to the [4Fe-4S] cluster binding site.

Belongs to the radical SAM superfamily. MoaA family. In terms of assembly, monomer and homodimer. Requires [4Fe-4S] cluster as cofactor.

The catalysed reaction is GTP + AH2 + S-adenosyl-L-methionine = (8S)-3',8-cyclo-7,8-dihydroguanosine 5'-triphosphate + 5'-deoxyadenosine + L-methionine + A + H(+). Its pathway is cofactor biosynthesis; molybdopterin biosynthesis. Functionally, catalyzes the cyclization of GTP to (8S)-3',8-cyclo-7,8-dihydroguanosine 5'-triphosphate. The sequence is that of GTP 3',8-cyclase from Xanthomonas campestris pv. campestris (strain B100).